The primary structure comprises 628 residues: Carbon monoxide dehydrogenase 1 (628 aa).

Residues cysteine 44, cysteine 52, cysteine 53, cysteine 56, cysteine 61, and cysteine 75 each contribute to the [4Fe-4S] cluster site. The [Ni-4Fe-5S] cluster site is built by histidine 266, cysteine 302, cysteine 340, cysteine 448, cysteine 478, and cysteine 519.

This sequence belongs to the Ni-containing carbon monoxide dehydrogenase family. Homodimer. The cofactor is [4Fe-4S] cluster. Requires [Ni-4Fe-5S] cluster as cofactor.

It carries out the reaction CO + 2 oxidized [2Fe-2S]-[ferredoxin] + H2O = 2 reduced [2Fe-2S]-[ferredoxin] + CO2 + 2 H(+). Functionally, CODH oxidizes carbon monoxide coupled, via CooF, to the reduction of a hydrogen cation by a hydrogenase (possibly CooH). This Methanosarcina mazei (strain ATCC BAA-159 / DSM 3647 / Goe1 / Go1 / JCM 11833 / OCM 88) (Methanosarcina frisia) protein is Carbon monoxide dehydrogenase 1 (cooS1).